We begin with the raw amino-acid sequence, 333 residues long: 4-hydroxy-3-methylbut-2-enyl diphosphate reductase (333 aa).

Position 20 (cysteine 20) interacts with [4Fe-4S] cluster. 2 residues coordinate (2E)-4-hydroxy-3-methylbut-2-enyl diphosphate: histidine 49 and histidine 85. Dimethylallyl diphosphate contacts are provided by histidine 49 and histidine 85. Isopentenyl diphosphate contacts are provided by histidine 49 and histidine 85. Cysteine 107 serves as a coordination point for [4Fe-4S] cluster. Histidine 135 contributes to the (2E)-4-hydroxy-3-methylbut-2-enyl diphosphate binding site. Residue histidine 135 coordinates dimethylallyl diphosphate. Histidine 135 contributes to the isopentenyl diphosphate binding site. Catalysis depends on glutamate 137, which acts as the Proton donor. Residue threonine 176 participates in (2E)-4-hydroxy-3-methylbut-2-enyl diphosphate binding. [4Fe-4S] cluster is bound at residue cysteine 206. Residues serine 234, serine 235, asparagine 236, and serine 279 each contribute to the (2E)-4-hydroxy-3-methylbut-2-enyl diphosphate site. Dimethylallyl diphosphate contacts are provided by serine 234, serine 235, asparagine 236, and serine 279. The isopentenyl diphosphate site is built by serine 234, serine 235, asparagine 236, and serine 279.

Belongs to the IspH family. It depends on [4Fe-4S] cluster as a cofactor.

It carries out the reaction isopentenyl diphosphate + 2 oxidized [2Fe-2S]-[ferredoxin] + H2O = (2E)-4-hydroxy-3-methylbut-2-enyl diphosphate + 2 reduced [2Fe-2S]-[ferredoxin] + 2 H(+). The enzyme catalyses dimethylallyl diphosphate + 2 oxidized [2Fe-2S]-[ferredoxin] + H2O = (2E)-4-hydroxy-3-methylbut-2-enyl diphosphate + 2 reduced [2Fe-2S]-[ferredoxin] + 2 H(+). It participates in isoprenoid biosynthesis; dimethylallyl diphosphate biosynthesis; dimethylallyl diphosphate from (2E)-4-hydroxy-3-methylbutenyl diphosphate: step 1/1. It functions in the pathway isoprenoid biosynthesis; isopentenyl diphosphate biosynthesis via DXP pathway; isopentenyl diphosphate from 1-deoxy-D-xylulose 5-phosphate: step 6/6. Functionally, catalyzes the conversion of 1-hydroxy-2-methyl-2-(E)-butenyl 4-diphosphate (HMBPP) into a mixture of isopentenyl diphosphate (IPP) and dimethylallyl diphosphate (DMAPP). Acts in the terminal step of the DOXP/MEP pathway for isoprenoid precursor biosynthesis. The polypeptide is 4-hydroxy-3-methylbut-2-enyl diphosphate reductase (Rhizobium leguminosarum bv. trifolii (strain WSM2304)).